Here is a 512-residue protein sequence, read N- to C-terminus: Reduced folate transporter (512 aa).

An N-acetylmethionine modification is found at Met-1. The Cytoplasmic portion of the chain corresponds to Met-1–Val-29. The helical transmembrane segment at Phe-30–Pro-50 threads the bilayer. Ile-48 and Thr-49 together coordinate folate. The Extracellular segment spans residues Phe-51–Val-62. A helical membrane pass occupies residues Thr-63–Thr-85. Residues Asp-86–Arg-89 are Cytoplasmic-facing. The chain crosses the membrane as a helical span at residues Tyr-90–Leu-110. The Extracellular segment spans residues Gly-111–Val-114. The helical transmembrane segment at Val-115–Tyr-137 threads the bilayer. Folate-binding residues include Glu-121 and Arg-131. The Cytoplasmic segment spans residues Ile-138–Ala-151. The helical transmembrane segment at Ser-152–Gly-176 threads the bilayer. A folate-binding site is contributed by Val-162. Residues His-177–Tyr-181 are Extracellular-facing. A helical membrane pass occupies residues Thr-182 to Phe-200. Residues Leu-201 to Gln-266 lie on the Cytoplasmic side of the membrane. Residues Leu-267–Trp-292 traverse the membrane as a helical segment. 3 residues coordinate folate: Tyr-281, Tyr-282, and Tyr-286. Residues Arg-293–Ser-300 lie on the Extracellular side of the membrane. A helical transmembrane segment spans residues Tyr-301–Leu-323. Over Ser-324–Leu-329 the chain is Cytoplasmic. The helical transmembrane segment at Trp-330–Phe-350 threads the bilayer. The Extracellular segment spans residues Gln-351–Arg-353. Residues Asp-354 to Thr-377 traverse the membrane as a helical segment. Residues Arg-366 and Gln-370 each contribute to the folate site. The Cytoplasmic portion of the chain corresponds to Phe-378–Leu-391. The helical transmembrane segment at Val-392–Arg-415 threads the bilayer. The segment at Ala-400–Ser-412 is required for substrate-binding. Residues Gly-416–Asp-423 lie on the Extracellular side of the membrane. Residues Gln-424–Leu-448 traverse the membrane as a helical segment. The Cytoplasmic segment spans residues Arg-449 to Ala-512. Residues Ser-467, Ser-472, and Ser-477 each carry the phosphoserine modification. A disordered region spans residues Leu-478–Ala-512.

This sequence belongs to the reduced folate carrier (RFC) transporter (TC 2.A.48) family.

It is found in the cell membrane. It localises to the apical cell membrane. The protein localises to the basolateral cell membrane. It catalyses the reaction 5-amino-1-(5-phospho-beta-D-ribosyl)imidazole-4-carboxamide(in) + (6S)-5-methyl-5,6,7,8-tetrahydrofolate(out) = 5-amino-1-(5-phospho-beta-D-ribosyl)imidazole-4-carboxamide(out) + (6S)-5-methyl-5,6,7,8-tetrahydrofolate(in). Antiporter that mediates the import of reduced folates, driven by the export of organic anions. Also acts as an importer of immunoreactive cyclic dinucleotides, but with a lower transporter activity. Mechanistically, acts as a secondary active transporter, which exports intracellular organic anions down their concentration gradients to facilitate the uptake of its substrates. Has high affinity for N5-methyltetrahydrofolate, the predominant circulating form of folate. Also mediates the import of antifolate drug methotrexate. 5-amino-4-imidazolecarboxamide riboside (AICAR), when phosphorylated to AICAR monophosphate, can serve as an organic anion for antiporter activity. The polypeptide is Reduced folate transporter (Mus musculus (Mouse)).